The sequence spans 676 residues: Methionine--tRNA ligase (676 aa).

The 'HIGH' region signature appears at 15–25; sequence PYANGSIHLGH. Zn(2+) is bound by residues Cys-146, Cys-149, Cys-159, and Cys-162. The 'KMSKS' region signature appears at 332–336; sequence KMSKS. Residue Lys-335 participates in ATP binding. Residues 574-676 form the tRNA-binding domain; it reads DFAKVDMRIA…SGAQPGQQVK (103 aa).

Belongs to the class-I aminoacyl-tRNA synthetase family. MetG type 1 subfamily. Homodimer. Zn(2+) is required as a cofactor.

Its subcellular location is the cytoplasm. It carries out the reaction tRNA(Met) + L-methionine + ATP = L-methionyl-tRNA(Met) + AMP + diphosphate. In terms of biological role, is required not only for elongation of protein synthesis but also for the initiation of all mRNA translation through initiator tRNA(fMet) aminoacylation. The protein is Methionine--tRNA ligase of Erwinia tasmaniensis (strain DSM 17950 / CFBP 7177 / CIP 109463 / NCPPB 4357 / Et1/99).